A 235-amino-acid polypeptide reads, in one-letter code: Myc target protein 1 (235 aa).

A Bipartite nuclear localization signal motif is present at residues 95-113; the sequence is RRRRASAPISQWSSSRRSR. Phosphoserine is present on residues S135, S138, S141, and S149.

The protein belongs to the MYCT1 family. Down-regulated in gastric cancer tissues.

Its subcellular location is the nucleus. In terms of biological role, may regulate certain MYC target genes, MYC seems to be a direct upstream transcriptional activator. Does not seem to significantly affect growth cell capacity. Overexpression seems to mediate many of the known phenotypic features associated with MYC, including promotion of apoptosis, alteration of morphology, enhancement of anchorage-independent growth, tumorigenic conversion, promotion of genomic instability, and inhibition of hematopoietic differentiation. This Homo sapiens (Human) protein is Myc target protein 1 (MYCT1).